The following is a 218-amino-acid chain: Thiopurine S-methyltransferase (218 aa).

S-adenosyl-L-methionine contacts are provided by tryptophan 10, leucine 45, glutamate 66, and arginine 123.

The protein belongs to the class I-like SAM-binding methyltransferase superfamily. TPMT family.

It is found in the cytoplasm. It catalyses the reaction S-adenosyl-L-methionine + a thiopurine = S-adenosyl-L-homocysteine + a thiopurine S-methylether.. In Shewanella sp. (strain MR-7), this protein is Thiopurine S-methyltransferase.